We begin with the raw amino-acid sequence, 231 residues long: 7-cyano-7-deazaguanine synthase (231 aa).

7 to 17 (LSSGLDSVAAL) provides a ligand contact to ATP. 4 residues coordinate Zn(2+): C195, C203, C206, and C209.

Belongs to the QueC family. Requires Zn(2+) as cofactor.

It catalyses the reaction 7-carboxy-7-deazaguanine + NH4(+) + ATP = 7-cyano-7-deazaguanine + ADP + phosphate + H2O + H(+). The protein operates within purine metabolism; 7-cyano-7-deazaguanine biosynthesis. Functionally, catalyzes the ATP-dependent conversion of 7-carboxy-7-deazaguanine (CDG) to 7-cyano-7-deazaguanine (preQ(0)). The protein is 7-cyano-7-deazaguanine synthase of Methanosarcina barkeri (strain Fusaro / DSM 804).